Here is an 87-residue protein sequence, read N- to C-terminus: Small ribosomal subunit protein uS17 (87 aa).

Belongs to the universal ribosomal protein uS17 family. Part of the 30S ribosomal subunit.

Its function is as follows. One of the primary rRNA binding proteins, it binds specifically to the 5'-end of 16S ribosomal RNA. The sequence is that of Small ribosomal subunit protein uS17 from Bacillus cereus (strain ATCC 14579 / DSM 31 / CCUG 7414 / JCM 2152 / NBRC 15305 / NCIMB 9373 / NCTC 2599 / NRRL B-3711).